The primary structure comprises 384 residues: 8-amino-7-oxononanoate synthase (384 aa).

Position 21 (Arg-21) interacts with substrate. 108–109 (GF) contributes to the pyridoxal 5'-phosphate binding site. His-133 is a substrate binding site. Pyridoxal 5'-phosphate-binding residues include Ser-179, His-207, and Thr-233. Lys-236 is subject to N6-(pyridoxal phosphate)lysine. Thr-352 is a substrate binding site.

It belongs to the class-II pyridoxal-phosphate-dependent aminotransferase family. BioF subfamily. Homodimer. The cofactor is pyridoxal 5'-phosphate.

The catalysed reaction is 6-carboxyhexanoyl-[ACP] + L-alanine + H(+) = (8S)-8-amino-7-oxononanoate + holo-[ACP] + CO2. It participates in cofactor biosynthesis; biotin biosynthesis. Catalyzes the decarboxylative condensation of pimeloyl-[acyl-carrier protein] and L-alanine to produce 8-amino-7-oxononanoate (AON), [acyl-carrier protein], and carbon dioxide. The polypeptide is 8-amino-7-oxononanoate synthase (Enterobacter sp. (strain 638)).